Reading from the N-terminus, the 469-residue chain is Type II secretion system protein HxcR (469 aa).

Residue 246–253 (GPTGSGKT) coordinates ATP.

The protein belongs to the GSP E family.

It is found in the cytoplasm. The catalysed reaction is ATP + H2O + cellular proteinSide 1 = ADP + phosphate + cellular proteinSide 2.. ATPase component of the type II secretion system required for the energy-dependent secretion of extracellular factors from the periplasm. Acts as a molecular motor to provide the energy that is required for the export of proteins. The Hxc system is involved in the secretion of low-molecular-weight alkaline phosphatase L-AP (LapA). Is probably also involved in the secretion of the phosphate-binding protein PstS. This is Type II secretion system protein HxcR from Pseudomonas aeruginosa (strain ATCC 15692 / DSM 22644 / CIP 104116 / JCM 14847 / LMG 12228 / 1C / PRS 101 / PAO1).